Consider the following 968-residue polypeptide: Insulin receptor substrate 1 (968 aa).

A PH domain is found at 8–109 (GMALSGYLKK…WLDKLLVLQR (102 aa)). The IRS-type PTB domain occupies 122–236 (YDHVWQVVIQ…SAMSAKTESN (115 aa)). Residues 248-269 (DLSHEPMRKRSSSANEASKPIN) form a disordered region. 2 positions are modified to phosphoserine: S286 and S287. Residues 304–329 (RNGTLSESSNQTYFGSNHGLRSNTIS) show a composition bias toward polar residues. Positions 304 to 370 (RNGTLSESSN…VDESDDNGSF (67 aa)) are disordered. Phosphoserine is present on S342. Y411 is modified (phosphotyrosine; by INSR). The short motif at 411–414 (YIPM) is the YXXM motif 1 element. The tract at residues 528–555 (TANRSQSSITKEGTSYGSSANRQKKSTS) is disordered. The span at 529-555 (ANRSQSSITKEGTSYGSSANRQKKSTS) shows a compositional bias: polar residues. Residue S555 is modified to Phosphoserine. Residues 641–644 (YLEM) carry the YXXM motif 2 motif. The span at 697 to 711 (EKWREQPSRSEEKKS) shows a compositional bias: basic and acidic residues. Residues 697–739 (EKWREQPSRSEEKKSNSPLNDNTFSSKPTNVESTSKSHDVHSA) form a disordered region. Positions 712 to 730 (NSPLNDNTFSSKPTNVEST) are enriched in polar residues. Y911 carries the phosphotyrosine; by INSR modification. Residues 922-968 (QNPAKYLKRGSRESPPVSACPEDGNTYAKIDFDQSDSSSSSSNIFNT) form a disordered region. 2 positions are modified to phosphoserine: S932 and S935. Residue Y948 is modified to Phosphotyrosine; by INSR. Residues 956-968 (SDSSSSSSNIFNT) show a composition bias toward low complexity.

Bindings to phosphatidylinositol 3-kinase and SHP2.

Activates phosphatidylinositol 3-kinase when bound to the regulatory p85 subunit. May mediate the control of various cellular processes by insulin-like peptides. When phosphorylated by the insulin receptor binds specifically to various cellular proteins containing SH2 domains. Involved in control of cell proliferation, cell size, and body and organ growth throughout development. Also has a role in a signaling pathway controlling the physiological response required to endure periods of low nutrient conditions. Insulin/insulin-like growth factor (IGF) signaling pathway has a role in regulating aging and is necessary in the ovary for vitellogenic maturation. This is Insulin receptor substrate 1 (chico) from Drosophila melanogaster (Fruit fly).